A 318-amino-acid polypeptide reads, in one-letter code: Cytochrome f (318 aa).

The N-terminal stretch at 1–33 is a signal peptide; it reads MKNTFSWIKKEITRSISLSLMIYIITRTSISNA. Positions 34, 54, 57, and 58 each coordinate heme. Residues 284–304 form a helical membrane-spanning segment; it reads VQGLLFFLASVILAQIFLVLK.

Belongs to the cytochrome f family. The 4 large subunits of the cytochrome b6-f complex are cytochrome b6, subunit IV (17 kDa polypeptide, petD), cytochrome f and the Rieske protein, while the 4 small subunits are PetG, PetL, PetM and PetN. The complex functions as a dimer. It depends on heme as a cofactor.

It localises to the plastid. It is found in the chloroplast thylakoid membrane. In terms of biological role, component of the cytochrome b6-f complex, which mediates electron transfer between photosystem II (PSII) and photosystem I (PSI), cyclic electron flow around PSI, and state transitions. This Oenothera biennis (German evening primrose) protein is Cytochrome f.